A 176-amino-acid chain; its full sequence is NAD(P)H-quinone oxidoreductase subunit J (176 aa).

Belongs to the complex I 30 kDa subunit family. In terms of assembly, NDH-1 can be composed of about 15 different subunits; different subcomplexes with different compositions have been identified which probably have different functions.

It is found in the cell inner membrane. The catalysed reaction is a plastoquinone + NADH + (n+1) H(+)(in) = a plastoquinol + NAD(+) + n H(+)(out). It catalyses the reaction a plastoquinone + NADPH + (n+1) H(+)(in) = a plastoquinol + NADP(+) + n H(+)(out). Functionally, NDH-1 shuttles electrons from an unknown electron donor, via FMN and iron-sulfur (Fe-S) centers, to quinones in the respiratory and/or the photosynthetic chain. The immediate electron acceptor for the enzyme in this species is believed to be plastoquinone. Couples the redox reaction to proton translocation, and thus conserves the redox energy in a proton gradient. Cyanobacterial NDH-1 also plays a role in inorganic carbon-concentration. This chain is NAD(P)H-quinone oxidoreductase subunit J, found in Gloeobacter violaceus (strain ATCC 29082 / PCC 7421).